Consider the following 153-residue polypeptide: UPF0756 membrane protein lmo1568 (153 aa).

The next 4 helical transmembrane spans lie at Met6–Ile26, Trp54–Phe74, Ser80–Ala100, and Leu117–Ile137.

It belongs to the UPF0756 family.

It is found in the cell membrane. This chain is UPF0756 membrane protein lmo1568, found in Listeria monocytogenes serovar 1/2a (strain ATCC BAA-679 / EGD-e).